The following is a 395-amino-acid chain: Ribonuclease D (395 aa).

A 3'-5' exonuclease domain is found at 14 to 181; sequence LITKSEDLAA…VYETLRDRLE (168 aa). One can recognise an HRDC domain in the interval 219–300; the sequence is NRRYLGLLRA…AEARGLPDAD (82 aa).

It belongs to the RNase D family. A divalent metal cation serves as cofactor.

It localises to the cytoplasm. It carries out the reaction Exonucleolytic cleavage that removes extra residues from the 3'-terminus of tRNA to produce 5'-mononucleotides.. Exonuclease involved in the 3' processing of various precursor tRNAs. Initiates hydrolysis at the 3'-terminus of an RNA molecule and releases 5'-mononucleotides. This Granulibacter bethesdensis (strain ATCC BAA-1260 / CGDNIH1) protein is Ribonuclease D.